The following is a 265-amino-acid chain: Palmitoyltransferase ZDHHC21 (265 aa).

Topologically, residues 1–16 (MGLRIHFVVDPHGWCC) are cytoplasmic. A helical transmembrane segment spans residues 17-37 (MGLIVFVWLYNIVLIPKIVLF). Residues 38–44 (PHYEEGH) are Extracellular-facing. A helical membrane pass occupies residues 45-65 (IPGILIIIFYGISIFCLVALV). Over 66–133 (RASITDPGRL…NNCVGEDNHW (68 aa)) the chain is Cytoplasmic. In terms of domain architecture, DHHC spans 90 to 140 (ELCNKCNLMRPKRSHHCSRCGHCVRRMDHHCPWINNCVGEDNHWLFLQLCF). Cysteine 120 (S-palmitoyl cysteine intermediate) is an active-site residue. Residues 134-154 (LFLQLCFYTELLTCYALMFSF) form a helical membrane-spanning segment. The Extracellular portion of the chain corresponds to 155-185 (CHYYYFLPLKKRNLDLFVFRHELAIMRLAAF). The chain crosses the membrane as a helical span at residues 186–206 (MGITMLVGITGLFYTQLIGII). Topologically, residues 207–265 (TDTTSIEKMSNCCEDISRPRKPWQQTFSEVFGTRWKILWFIPFRQRQPLRVPYHFANHV) are cytoplasmic.

It belongs to the DHHC palmitoyltransferase family. Widely expressed.

The protein localises to the golgi apparatus membrane. It localises to the golgi apparatus. Its subcellular location is the cis-Golgi network membrane. The protein resides in the cell membrane. The enzyme catalyses L-cysteinyl-[protein] + hexadecanoyl-CoA = S-hexadecanoyl-L-cysteinyl-[protein] + CoA. Its function is as follows. Palmitoyltransferase that catalyzes the addition of palmitate onto various protein substrates. Palmitoylates sex steroid hormone receptors, including ESR1, PGR and AR, thereby regulating their targeting to the plasma membrane. This affects rapid intracellular signaling by sex hormones via ERK and AKT kinases and the generation of cAMP, but does not affect that mediated by their nuclear receptor. Palmitoylates FYN, regulates its localization in hair follicles and plays a key role in epidermal homeostasis and hair follicle differentiation. Through the palmitoylation of PLCB1 and the regulation of PLCB1 downstream signaling may indirectly regulate the function of the endothelial barrier and the adhesion of leukocytes to the endothelium. Also has a palmitoyltransferase activity toward ADRA1D, positively regulating its activity and expression and may thereby play a role in vascular contraction. May also palmitoylate eNOS and LCK. The protein is Palmitoyltransferase ZDHHC21 of Homo sapiens (Human).